Consider the following 687-residue polypeptide: Chloride channel protein ClC-Kb (687 aa).

Residues 1–50 lie on the Cytoplasmic side of the membrane; sequence MEEIVGLREGSPRKPVPLQELWRPCPRIRRNIQGSLEWLKERLFRVGEDW. Helical transmembrane passes span 51-82 and 91-111; these read YFLV…KWLY and LRYL…SGFS. Positions 116–127 form an intramembrane region, helical; it reads PSSGGSGIPEVK. Serine 121 contributes to the chloride binding site. 2 helical membrane passes run 141-160 and 161-180; these read IKNF…TGST and IFLG…AAYL. Asparagine 193 carries N-linked (GlcNAc...) asparagine glycosylation. Positions 203–224 form an intramembrane region, helical; sequence AGAAVGVATVFAAPISGVLFSI. The helical transmembrane segment at 236-255 threads the bilayer; sequence YWRGFFAATCGAFMFHLLAV. Ca(2+)-binding residues include glutamate 259, glutamate 261, aspartate 278, and glutamate 281. The next 2 helical transmembrane spans lie at 282–310 and 325–342; these read IFFF…LFFL and PLYS…TYPP. Positions 349–360 form an intramembrane region, helical; it reads ASRLSMSEYLET. Transmembrane regions (helical) follow at residues 400–420 and 421–440; these read GTLV…TTIP and IPAG…GRLF. Phenylalanine 426 contacts chloride. The helical intramembrane region spans 464–496; sequence GAYALAGAAAFSGAVTHTLSTALLAFEVSGQIV. A helical transmembrane segment spans residues 500-520; that stretch reads PVLMAVLAANAICQSYQPSFY. The Cytoplasmic segment spans residues 521-687; the sequence is DGTIIVKKLP…STLTNPPAPK (167 aa). 2 CBS domains span residues 551-609 and 626-687; these read MNCT…DSAS and CPTQ…PAPK.

Belongs to the chloride channel (TC 2.A.49) family. CLCNKB subfamily. As to quaternary structure, homodimer. Interacts with BSND. N-glycosylated. As to expression, expressed predominantly in the kidney. Expressed in all segments of the nephron examined, including the S2 segment and the glomerulus.

Its subcellular location is the basolateral cell membrane. It catalyses the reaction chloride(in) = chloride(out). The enzyme catalyses iodide(out) = iodide(in). It carries out the reaction nitrate(in) = nitrate(out). The catalysed reaction is bromide(in) = bromide(out). Anion-selective channel permeable to small monovalent anions with ion selectivity for chloride &gt; bromide &gt; nitrate &gt; iodide. Forms a homodimeric channel where each subunit has its own ion conduction pathway. May conduct double-barreled currents controlled by two types of gates, two fast gates that control each subunit independently and a slow common gate that opens and shuts off both subunits simultaneously. Assembles with the regulatory subunit BSND/Barttin for sorting at the basolateral plasma membrane domain and functional switch to the ion conducting state. CLCNKB:BSND channels display mostly a linear current-voltage relationship controlled by common gate. Mediates chloride conductance along nephron segments, namely the thick ascending limb of Henle's loop, convoluted tubule and the collecting duct, contributing to the maintenance of systemic acid-base and electrolyte homeostasis. Conducts chloride currents in the stria vascularis of the inner ear to establish the endocochlear potential necessary for normal hearing. This chain is Chloride channel protein ClC-Kb, found in Rattus norvegicus (Rat).